Reading from the N-terminus, the 185-residue chain is Elongation factor P (185 aa).

The protein belongs to the elongation factor P family.

The protein resides in the cytoplasm. The protein operates within protein biosynthesis; polypeptide chain elongation. In terms of biological role, involved in peptide bond synthesis. Stimulates efficient translation and peptide-bond synthesis on native or reconstituted 70S ribosomes in vitro. Probably functions indirectly by altering the affinity of the ribosome for aminoacyl-tRNA, thus increasing their reactivity as acceptors for peptidyl transferase. The sequence is that of Elongation factor P from Streptococcus equi subsp. equi (strain 4047).